The primary structure comprises 111 residues: Translation initiation factor 1A 1 (111 aa).

Residues 1–28 (MTLADLKKPTSRASPSTEETVTRVRTPR) form a disordered region. An S1-like domain is found at 22-96 (TRVRTPRREN…EKADVIWKYT (75 aa)).

Belongs to the eIF-1A family.

Functionally, seems to be required for maximal rate of protein biosynthesis. Enhances ribosome dissociation into subunits and stabilizes the binding of the initiator Met-tRNA(I) to 40 S ribosomal subunits. The polypeptide is Translation initiation factor 1A 1 (eIF1A1) (Methanosarcina mazei (strain ATCC BAA-159 / DSM 3647 / Goe1 / Go1 / JCM 11833 / OCM 88) (Methanosarcina frisia)).